The primary structure comprises 209 residues: Imidazole glycerol phosphate synthase subunit HisH (209 aa).

The Glutamine amidotransferase type-1 domain occupies 1–205; sequence MIAIIDYGMG…KGVVESWKSS (205 aa). Residue Cys79 is the Nucleophile of the active site. Residues His180 and Glu182 contribute to the active site.

Heterodimer of HisH and HisF.

Its subcellular location is the cytoplasm. The catalysed reaction is 5-[(5-phospho-1-deoxy-D-ribulos-1-ylimino)methylamino]-1-(5-phospho-beta-D-ribosyl)imidazole-4-carboxamide + L-glutamine = D-erythro-1-(imidazol-4-yl)glycerol 3-phosphate + 5-amino-1-(5-phospho-beta-D-ribosyl)imidazole-4-carboxamide + L-glutamate + H(+). The enzyme catalyses L-glutamine + H2O = L-glutamate + NH4(+). It functions in the pathway amino-acid biosynthesis; L-histidine biosynthesis; L-histidine from 5-phospho-alpha-D-ribose 1-diphosphate: step 5/9. Its function is as follows. IGPS catalyzes the conversion of PRFAR and glutamine to IGP, AICAR and glutamate. The HisH subunit catalyzes the hydrolysis of glutamine to glutamate and ammonia as part of the synthesis of IGP and AICAR. The resulting ammonia molecule is channeled to the active site of HisF. In Bacillus cereus (strain ATCC 10987 / NRS 248), this protein is Imidazole glycerol phosphate synthase subunit HisH.